The sequence spans 160 residues: ATP synthase subunit b 3 (160 aa).

Residues 5–25 form a helical membrane-spanning segment; the sequence is PTFWVLVAFVLFVAAVWRIAA.

The protein belongs to the ATPase B chain family. F-type ATPases have 2 components, F(1) - the catalytic core - and F(0) - the membrane proton channel. F(1) has five subunits: alpha(3), beta(3), gamma(1), delta(1), epsilon(1). F(0) has three main subunits: a(1), b(2) and c(10-14). The alpha and beta chains form an alternating ring which encloses part of the gamma chain. F(1) is attached to F(0) by a central stalk formed by the gamma and epsilon chains, while a peripheral stalk is formed by the delta and b chains.

It is found in the cell inner membrane. Functionally, f(1)F(0) ATP synthase produces ATP from ADP in the presence of a proton or sodium gradient. F-type ATPases consist of two structural domains, F(1) containing the extramembraneous catalytic core and F(0) containing the membrane proton channel, linked together by a central stalk and a peripheral stalk. During catalysis, ATP synthesis in the catalytic domain of F(1) is coupled via a rotary mechanism of the central stalk subunits to proton translocation. Component of the F(0) channel, it forms part of the peripheral stalk, linking F(1) to F(0). This is ATP synthase subunit b 3 from Rhodospirillum centenum (strain ATCC 51521 / SW).